The primary structure comprises 210 residues: Amelogenin, X isoform (210 aa).

A signal peptide spans 1–16 (MGTWILFACLLGAAFA). S32 bears the Phosphoserine mark. 2 stretches are compositionally biased toward low complexity: residues 109-119 (VAPQQPMMPVP) and 136-169 (PSAQ…HPMQ). A disordered region spans residues 109 to 187 (VAPQQPMMPV…PPLFSMQPLS (79 aa)). The segment covering 170–179 (PLAPQPPLPP) has biased composition (pro residues).

The protein belongs to the amelogenin family. In terms of assembly, interacts with KRT5. Post-translationally, several forms are produced by C-terminal processing. In terms of processing, phosphorylated by FAM20C in vitro.

The protein resides in the secreted. It localises to the extracellular space. The protein localises to the extracellular matrix. Its function is as follows. Plays a role in the biomineralization of teeth. Seems to regulate the formation of crystallites during the secretory stage of tooth enamel development. Thought to play a major role in the structural organization and mineralization of developing enamel. This chain is Amelogenin, X isoform (Amelx), found in Mus musculus (Mouse).